The sequence spans 126 residues: Large ribosomal subunit protein bL12 (126 aa).

The protein belongs to the bacterial ribosomal protein bL12 family. As to quaternary structure, homodimer. Part of the ribosomal stalk of the 50S ribosomal subunit. Forms a multimeric L10(L12)X complex, where L10 forms an elongated spine to which 2 to 4 L12 dimers bind in a sequential fashion. Binds GTP-bound translation factors.

Forms part of the ribosomal stalk which helps the ribosome interact with GTP-bound translation factors. Is thus essential for accurate translation. The protein is Large ribosomal subunit protein bL12 of Bordetella avium (strain 197N).